A 261-amino-acid polypeptide reads, in one-letter code: Probable electron transfer flavoprotein subunit beta (261 aa).

Serine 2 bears the N-acetylserine mark.

Belongs to the ETF beta-subunit/FixA family. Heterodimer of an alpha and a beta subunit. Interacts with YFH1. FAD is required as a cofactor. The cofactor is AMP.

Its subcellular location is the mitochondrion matrix. Functionally, the electron transfer flavoprotein serves as a specific electron acceptor for several dehydrogenases, including five acyl-CoA dehydrogenases, glutaryl-CoA and sarcosine dehydrogenase. It transfers the electrons to the main mitochondrial respiratory chain via ETF-ubiquinone oxidoreductase (ETF dehydrogenase). In Saccharomyces cerevisiae (strain ATCC 204508 / S288c) (Baker's yeast), this protein is Probable electron transfer flavoprotein subunit beta (CIR1).